The primary structure comprises 437 residues: ATP-dependent protease ATPase subunit HslU (437 aa).

Residues V18, 60 to 65 (GCGKTE), D250, E315, and R387 each bind ATP.

It belongs to the ClpX chaperone family. HslU subfamily. A double ring-shaped homohexamer of HslV is capped on each side by a ring-shaped HslU homohexamer. The assembly of the HslU/HslV complex is dependent on binding of ATP.

Its subcellular location is the cytoplasm. Its function is as follows. ATPase subunit of a proteasome-like degradation complex; this subunit has chaperone activity. The binding of ATP and its subsequent hydrolysis by HslU are essential for unfolding of protein substrates subsequently hydrolyzed by HslV. HslU recognizes the N-terminal part of its protein substrates and unfolds these before they are guided to HslV for hydrolysis. The polypeptide is ATP-dependent protease ATPase subunit HslU (Methylorubrum populi (strain ATCC BAA-705 / NCIMB 13946 / BJ001) (Methylobacterium populi)).